The chain runs to 344 residues: Arginine N-succinyltransferase (344 aa).

Leucine 125 contacts succinyl-CoA. Catalysis depends on histidine 229, which acts as the Proton donor.

Belongs to the arginine N-succinyltransferase family.

The enzyme catalyses succinyl-CoA + L-arginine = N(2)-succinyl-L-arginine + CoA + H(+). Its pathway is amino-acid degradation; L-arginine degradation via AST pathway; L-glutamate and succinate from L-arginine: step 1/5. Catalyzes the transfer of succinyl-CoA to arginine to produce N(2)-succinylarginine. This Escherichia coli O6:H1 (strain CFT073 / ATCC 700928 / UPEC) protein is Arginine N-succinyltransferase.